The following is a 227-amino-acid chain: uncharacterized protein (227 aa).

Helical transmembrane passes span 12-32 and 80-100; these read IVLF…YLYA and IILI…KIPL.

It localises to the cell membrane. This is an uncharacterized protein from Methanocaldococcus jannaschii (strain ATCC 43067 / DSM 2661 / JAL-1 / JCM 10045 / NBRC 100440) (Methanococcus jannaschii).